Reading from the N-terminus, the 292-residue chain is GTP cyclohydrolase FolE2 (292 aa).

This sequence belongs to the GTP cyclohydrolase IV family.

It catalyses the reaction GTP + H2O = 7,8-dihydroneopterin 3'-triphosphate + formate + H(+). The protein operates within cofactor biosynthesis; 7,8-dihydroneopterin triphosphate biosynthesis; 7,8-dihydroneopterin triphosphate from GTP: step 1/1. Converts GTP to 7,8-dihydroneopterin triphosphate. This chain is GTP cyclohydrolase FolE2, found in Staphylococcus carnosus (strain TM300).